The sequence spans 291 residues: Protease HtpX homolog (291 aa).

Helical transmembrane passes span 4-24 and 39-59; these read ILLFILTNVAVVAVLGIVASL and SALLGFALIMGFGGAIISLLI. A Zn(2+)-binding site is contributed by His-144. The active site involves Glu-145. Position 148 (His-148) interacts with Zn(2+). Helical transmembrane passes span 159-179 and 199-219; these read LIQGVMNTFVVFLSRVIGYAV and VSTIVLDIVLGFAAAIVVAWF. Glu-224 provides a ligand contact to Zn(2+).

This sequence belongs to the peptidase M48B family. It depends on Zn(2+) as a cofactor.

It localises to the cell inner membrane. This is Protease HtpX homolog from Polaromonas naphthalenivorans (strain CJ2).